The sequence spans 129 residues: Large ribosomal subunit protein bL12 (129 aa).

The protein belongs to the bacterial ribosomal protein bL12 family. In terms of assembly, homodimer. Part of the ribosomal stalk of the 50S ribosomal subunit. Forms a multimeric L10(L12)X complex, where L10 forms an elongated spine to which 2 to 4 L12 dimers bind in a sequential fashion. Binds GTP-bound translation factors.

In terms of biological role, forms part of the ribosomal stalk which helps the ribosome interact with GTP-bound translation factors. Is thus essential for accurate translation. The protein is Large ribosomal subunit protein bL12 of Thermosipho melanesiensis (strain DSM 12029 / CIP 104789 / BI429).